Consider the following 395-residue polypeptide: Phosphoprotein (395 aa).

A compositionally biased stretch (polar residues) spans 143-157 (FSSGPSLTDQASSKD). The segment at 143 to 183 (FSSGPSLTDQASSKDPNFKRGGEKLTDATKADIGGSGASPG) is disordered. Over residues 158 to 172 (PNFKRGGEKLTDATK) the composition is skewed to basic and acidic residues. The tract at residues 220 to 283 (ENVKEIIEIL…MTTMKIMDPS (64 aa)) is multimerization.

The protein belongs to the rubulavirus/avulavirus P protein family. In terms of assembly, homotetramer. Interacts (via multimerization domain) with polymerase L; this interaction forms the polymerase L-P complex. Interacts (via N-terminus) with N0 (via Ncore); this interaction allows P to chaperon N0 to avoid N polymerization before encapsidation. Interacts (via C-terminus) with N-RNA template; this interaction positions the polymerase on the template for both transcription and replication.

Functionally, essential cofactor of the RNA polymerase L that plays a central role in the transcription and replication by forming the polymerase complex with RNA polymerase L and recruiting L to the genomic N-RNA template for RNA synthesis. Also plays a central role in the encapsidation of nascent RNA chains by forming the encapsidation complex with the nucleocapsid protein N (N-P complex). Acts as a chaperone for newly synthesized free N protein, so-called N0, allowing encapsidation of nascent RNA chains during replication. The nucleoprotein protein N prevents excessive phosphorylation of P, which leads to down-regulation of viral transcription/ replication. Participates, together with N, in the formation of viral factories (viroplasms), which are large inclusions in the host cytoplasm where replication takes place. The protein is Phosphoprotein (P/V) of Simian virus 41 (SV41).